The following is a 103-amino-acid chain: Small ribosomal subunit protein uS10 (103 aa).

It belongs to the universal ribosomal protein uS10 family. In terms of assembly, part of the 30S ribosomal subunit.

Functionally, involved in the binding of tRNA to the ribosomes. The chain is Small ribosomal subunit protein uS10 from Chlorobaculum parvum (strain DSM 263 / NCIMB 8327) (Chlorobium vibrioforme subsp. thiosulfatophilum).